A 407-amino-acid polypeptide reads, in one-letter code: Substance-P receptor (407 aa).

The segment at 1–20 is disordered; that stretch reads MDNVLPVDSDLFPNTSTNTS. Over 1–31 the chain is Extracellular; sequence MDNVLPVDSDLFPNTSTNTSESNQFVQPTWQ. Asn14 and Asn18 each carry an N-linked (GlcNAc...) asparagine glycan. The helical transmembrane segment at 32–54 threads the bilayer; it reads IVLWAAAYTVIVVTSVVGNVVVI. Over 55-64 the chain is Cytoplasmic; it reads WIILAHKRMR. Residues 65–86 form a helical membrane-spanning segment; it reads TVTNYFLVNLAFAEACMAAFNT. Residues 87-106 are Extracellular-facing; it reads VVNFTYAVHNVWYYGLFYCK. An intrachain disulfide couples Cys105 to Cys180. A helical transmembrane segment spans residues 107–128; the sequence is FHNFFPIAALFASIYSMTAVAF. Residues 129–148 are Cytoplasmic-facing; it reads DRYMAIIHPLQPRLSATATK. Residues 149–169 traverse the membrane as a helical segment; the sequence is VVIFVIWVLALLLAFPQGYYS. Residues 170–194 lie on the Extracellular side of the membrane; that stretch reads TTETMPSRVVCMIEWPEHPNRTYEK. The chain crosses the membrane as a helical span at residues 195–219; it reads AYHICVTVLIYFLPLLVIGYAYTVV. At 220–248 the chain is on the cytoplasmic side; sequence GITLWASEIPGDSSDRYHEQVSAKRKVVK. The helical transmembrane segment at 249–270 threads the bilayer; it reads MMIVVVCTFAICWLPFHIFFLL. Residues 271-283 are Extracellular-facing; the sequence is PYINPDLYLKKFI. A helical transmembrane segment spans residues 284-308; sequence QQVYLASMWLAMSSTMYNPIIYCCL. Residues 309–407 are Cytoplasmic-facing; it reads NDRFRLGFKH…SSSFYSNMLA (99 aa). The S-palmitoyl cysteine moiety is linked to residue Cys322. A disordered region spans residues 362–407; that stretch reads VGAHEDEPEEGPKATPSSLDLTSNGSSRSNSKTMTESSSFYSNMLA. The span at 376–407 shows a compositional bias: polar residues; it reads TPSSLDLTSNGSSRSNSKTMTESSSFYSNMLA.

Belongs to the G-protein coupled receptor 1 family. In terms of assembly, interacts with ARRB1.

The protein localises to the cell membrane. Functionally, this is a receptor for the tachykinin neuropeptide substance P. It is probably associated with G proteins that activate a phosphatidylinositol-calcium second messenger system. The rank order of affinity of this receptor to tachykinins is: substance P &gt; substance K &gt; neuromedin K. The sequence is that of Substance-P receptor (Tacr1) from Mus musculus (Mouse).